Reading from the N-terminus, the 458-residue chain is Phosphoglucosamine mutase (458 aa).

The Phosphoserine intermediate role is filled by Ser108. Mg(2+) contacts are provided by Ser108, Asp247, Asp249, and Asp251. Ser108 carries the post-translational modification Phosphoserine.

Belongs to the phosphohexose mutase family. Requires Mg(2+) as cofactor. Activated by phosphorylation.

The enzyme catalyses alpha-D-glucosamine 1-phosphate = D-glucosamine 6-phosphate. Functionally, catalyzes the conversion of glucosamine-6-phosphate to glucosamine-1-phosphate. The chain is Phosphoglucosamine mutase from Nitrosomonas europaea (strain ATCC 19718 / CIP 103999 / KCTC 2705 / NBRC 14298).